Consider the following 166-residue polypeptide: Urease accessory protein UreE (166 aa).

Residues 133-154 form a disordered region; sequence QPEHGAYGGGHHHSRHGDEDFN.

Belongs to the UreE family.

The protein localises to the cytoplasm. In terms of biological role, involved in urease metallocenter assembly. Binds nickel. Probably functions as a nickel donor during metallocenter assembly. In Pseudomonas fluorescens (strain SBW25), this protein is Urease accessory protein UreE.